A 258-amino-acid chain; its full sequence is MHNSVASKLKLAELLALTKTEQILRLGQINAELEQLTALERVKWALENLEGTHVVSSSFGIQAALMLHLVTQAKSDIPVILTDTGYLFPETYRFIDELSQKLTLNLQVFRAQQSSNWQEAQYGKLWDQGIEGIEKYNKLNKVEPMRRALDELEAGTWFSGLRREQSQSRANLPILSIQNGVFKFLPVIDWTNKDVHYYLEEHGLSYHPLREQGYLSVGDTHTTKKWEPGMTEEETRFNGLKRECGLHEDDGEQYGSGI.

The Nucleophile; cysteine thiosulfonate intermediate role is filled by cysteine 244.

The protein belongs to the PAPS reductase family. CysH subfamily.

The protein localises to the cytoplasm. The catalysed reaction is [thioredoxin]-disulfide + sulfite + adenosine 3',5'-bisphosphate + 2 H(+) = [thioredoxin]-dithiol + 3'-phosphoadenylyl sulfate. It participates in sulfur metabolism; hydrogen sulfide biosynthesis; sulfite from sulfate: step 3/3. Its function is as follows. Catalyzes the formation of sulfite from phosphoadenosine 5'-phosphosulfate (PAPS) using thioredoxin as an electron donor. The protein is Phosphoadenosine 5'-phosphosulfate reductase of Vibrio atlanticus (strain LGP32) (Vibrio splendidus (strain Mel32)).